A 356-amino-acid polypeptide reads, in one-letter code: OVARIAN TUMOR DOMAIN-containing deubiquitinating enzyme 10 (356 aa).

The tract at residues 86–117 (DYSHQNQQQQHQQEGYTNNYSNNNNGYAWNDQ) is disordered. Positions 89 to 115 (HQNQQQQHQQEGYTNNYSNNNNGYAWN) are enriched in low complexity. In terms of domain architecture, OTU spans 213-337 (FTEVKVPGDG…EVHYNAIYLN (125 aa)). Asp-221 is an active-site residue. Cys-224 acts as the Nucleophile in catalysis. His-330 is an active-site residue.

It belongs to the peptidase C85 family.

It carries out the reaction Thiol-dependent hydrolysis of ester, thioester, amide, peptide and isopeptide bonds formed by the C-terminal Gly of ubiquitin (a 76-residue protein attached to proteins as an intracellular targeting signal).. In terms of biological role, hydrolase that can remove conjugated ubiquitin from proteins in vitro and may therefore play an important regulatory role at the level of protein turnover by preventing degradation. Cysteine protease with a preference for 'Lys-63' over 'Lys-48' over 'Met-1' -linked ubiquitin (UB) tetramers as substrates. Also cleaves RUB-GST fusion. The polypeptide is OVARIAN TUMOR DOMAIN-containing deubiquitinating enzyme 10 (Arabidopsis thaliana (Mouse-ear cress)).